Here is a 748-residue protein sequence, read N- to C-terminus: E3 ubiquitin-protein ligase SMURF2 (748 aa).

The region spanning 1 to 119 is the C2 domain; it reads MSNPGGRRNG…TGYQRLDLCK (119 aa). Lys119 participates in a covalent cross-link: Glycyl lysine isopeptide (Lys-Gly) (interchain with G-Cter in ubiquitin). 3 WW domains span residues 157-190, 251-284, and 297-330; these read NDLP…RPTR, PDLP…DPRV, and GPLP…DPRL. Residues 414-748 enclose the HECT domain; the sequence is RPKDLWKRLM…IEETCGFAVE (335 aa). Cys716 acts as the Glycyl thioester intermediate in catalysis.

As to quaternary structure, interacts (via WW domains) with SMAD1. Interacts (via WW domains) with SMAD2 (via PY-motif). Interacts (via WW domains) with SMAD3 (via PY-motif). Interacts with SMAD6. Interacts with SMAD7 (via PY-motif) and TGFBR1; SMAD7 recruits SMURF2 to the TGF-beta receptor and regulates its degradation. Does not interact with SMAD4; SMAD4 lacks a PY-motif. Interacts with AIMP1. Interacts with NDFIP1 and NDFIP2; this interaction activates the E3 ubiquitin-protein ligase. Interacts with TTC3. Auto-ubiquitinated and ubiquitinated in the presence of RNF11 and UBE2D1. Ubiquitinated by the SCF(FBXL15) complex and TTC3, leading to its degradation by the proteasome. 'Lys-48'-linked polyubiquitination mediated by TRAF4 at Lys-119 leads to SMURF2 proteasomal degradation.

The protein localises to the nucleus. Its subcellular location is the cytoplasm. It localises to the cell membrane. The protein resides in the membrane raft. The enzyme catalyses S-ubiquitinyl-[E2 ubiquitin-conjugating enzyme]-L-cysteine + [acceptor protein]-L-lysine = [E2 ubiquitin-conjugating enzyme]-L-cysteine + N(6)-ubiquitinyl-[acceptor protein]-L-lysine.. It participates in protein modification; protein ubiquitination. Its activity is regulated as follows. Activated by NDFIP1- and NDFIP2-binding. Functionally, E3 ubiquitin-protein ligase which accepts ubiquitin from an E2 ubiquitin-conjugating enzyme in the form of a thioester and then directly transfers the ubiquitin to targeted substrates. Interacts with SMAD7 to trigger SMAD7-mediated transforming growth factor beta/TGF-beta receptor ubiquitin-dependent degradation, thereby down-regulating TGF-beta signaling. In addition, interaction with SMAD7 activates autocatalytic degradation, which is prevented by interaction with AIMP1. Also forms a stable complex with TGF-beta receptor-mediated phosphorylated SMAD1, SMAD2 and SMAD3, and targets SMAD1 and SMAD2 for ubiquitination and proteasome-mediated degradation. SMAD2 may recruit substrates, such as SNON, for ubiquitin-dependent degradation. Negatively regulates TGFB1-induced epithelial-mesenchymal transition and myofibroblast differentiation. In Mus musculus (Mouse), this protein is E3 ubiquitin-protein ligase SMURF2.